Reading from the N-terminus, the 447-residue chain is Phosphoglucosamine mutase (447 aa).

Catalysis depends on Ser-102, which acts as the Phosphoserine intermediate. Mg(2+) is bound by residues Ser-102, Asp-241, Asp-243, and Asp-245. Ser-102 is modified (phosphoserine).

Belongs to the phosphohexose mutase family. Mg(2+) serves as cofactor. Activated by phosphorylation.

The enzyme catalyses alpha-D-glucosamine 1-phosphate = D-glucosamine 6-phosphate. Functionally, catalyzes the conversion of glucosamine-6-phosphate to glucosamine-1-phosphate. This chain is Phosphoglucosamine mutase, found in Methylococcus capsulatus (strain ATCC 33009 / NCIMB 11132 / Bath).